A 317-amino-acid chain; its full sequence is Terpene synthase 3 (317 aa).

The DDxx(x)D/E motif signature appears at 96 to 101 (DDFYFE). Residues 223–231 (NDMVSFERE) carry the NDxxSxxxD/E motif motif.

The protein belongs to the terpene synthase family.

In terms of biological role, terpene synthase that converts its substrate farnesyl diphosphate (FPP) into the sesquiterpene CAS 137235-51-9 as a major product. Is also able to convert FPP into 9-epi-(E)-caryophyllene, alpha-neoclovene, beta-neoclovene, and 3 yet unidentified sesquiterpenes. The protein is Terpene synthase 3 of Dictyostelium purpureum (Slime mold).